Consider the following 106-residue polypeptide: Neisseria hypothetical transcription factor (106 aa).

The HTH cro/C1-type domain maps to 26–80 (MRLFRVNKGWSQEELARQCGLDRTYVSAVERKRWNIALSNIEKMAAALGVAAYQL). A DNA-binding region (H-T-H motif) is located at residues 37–56 (QEELARQCGLDRTYVSAVER).

As to quaternary structure, homodimer. Can interact with the dimeric form of the DNA mimic protein DMP19 with 1:1 stoichiometry.

The protein localises to the cytoplasm. With respect to regulation, repressor activity is inhibited in the presence of the DNA mimic protein DMP19, which interacts with NHTF and prevents binding of NHTF to its DNA-binding sites. In terms of biological role, transcriptional regulator probably involved in the response to nitrogen levels. Down-regulates its own expression as well as the expression of the downstream gene, glnD, which encodes the [Protein-PII] uridylyltransferase, a key enzyme in the nitrogen regulation system. Acts by binding to a specific palindromic DNA sequence (5'-TGTNANTNACA-3') in its 5'-untranslated region. The chain is Neisseria hypothetical transcription factor from Neisseria meningitidis serogroup B (strain ATCC BAA-335 / MC58).